The chain runs to 257 residues: Hydroxyacylglutathione hydrolase (257 aa).

7 residues coordinate Zn(2+): His55, His57, Asp59, His60, His112, Asp129, and His167.

Belongs to the metallo-beta-lactamase superfamily. Glyoxalase II family. In terms of assembly, monomer. It depends on Zn(2+) as a cofactor.

The enzyme catalyses an S-(2-hydroxyacyl)glutathione + H2O = a 2-hydroxy carboxylate + glutathione + H(+). It participates in secondary metabolite metabolism; methylglyoxal degradation; (R)-lactate from methylglyoxal: step 2/2. Functionally, thiolesterase that catalyzes the hydrolysis of S-D-lactoyl-glutathione to form glutathione and D-lactic acid. The protein is Hydroxyacylglutathione hydrolase of Pseudoalteromonas translucida (strain TAC 125).